The chain runs to 700 residues: MANGWTGNILRVNLTTGNITLEDSSKFKSFVGGMGFGYKIMYDEVPPGTKPFDEANKLVFATGPLTGSGAPCSSRVNITSLSTFTKGNLVVDAHMGGFFAAQMKFAGYDVIIIEGKAKSPVWLKIKDDKVSLEKADFLWGKGTRATTEEICRLTSPETCVAAIGQAGENLVPLSGMLNSRNHSGGAGTGAIMGSKNLKAIAVEGTKGVNIADRQEMKRLNDYMMTELIGANNNHVVPSTPQSWAEYSDPKSRWTARKGLFWGAAEGGPIETGEIPPGNQNTVGFRTYKSVFDLGPAAEKYTVKMSGCHSCPIRCMTQMNIPRVKEFGVPSTGGNTCVANFVHTTIFPNGPKDFEDKDDGRVIGNLVGLNLFDDYGLWCNYGQLHRDFTYCYSKGVFKRVLPAEEYAEIRWDQLEAGDVNFIKDFYYRLAHRVGELSHLADGSYAIAERWNLGEEYWGYAKNKLWSPFGYPVHHANEASAQVGSIVNCMFNRDCMTHTHINFIGSGLPLKLQREVAKELFGSEDAYDETKNYTPINDAKIKYAKWSLLRVCLHNAVTLCNWVWPMTVSPLKSRNYRGDLALEAKFFKAITGEEMTQEKLDLAAERIFTLHRAYTVKLMQTKDMRNEHDLICSWVFDKDPQIPVFTEGTDKMDRDDMHASLTMFYKEMGWDPQLGCPTRETLQRLGLEDIAADLAAHNLLPA.

[4Fe-4S] cluster contacts are provided by cysteine 307, cysteine 310, cysteine 314, and cysteine 558.

The protein belongs to the AOR/FOR family. [4Fe-4S] cluster serves as cofactor. Mo-molybdopterin is required as a cofactor. The cofactor is tungstopterin.

This is an uncharacterized protein from Escherichia coli (strain K12).